A 239-amino-acid polypeptide reads, in one-letter code: tRNA (guanine-N(1)-)-methyltransferase (239 aa).

S-adenosyl-L-methionine contacts are provided by residues Gly108 and 127–132 (IGDYVL).

The protein belongs to the RNA methyltransferase TrmD family. As to quaternary structure, homodimer.

It localises to the cytoplasm. The catalysed reaction is guanosine(37) in tRNA + S-adenosyl-L-methionine = N(1)-methylguanosine(37) in tRNA + S-adenosyl-L-homocysteine + H(+). Its function is as follows. Specifically methylates guanosine-37 in various tRNAs. The protein is tRNA (guanine-N(1)-)-methyltransferase of Lactobacillus helveticus (strain DPC 4571).